Consider the following 125-residue polypeptide: Succinate dehydrogenase assembly factor 3, mitochondrial (125 aa).

The transit peptide at Met-1 to Leu-42 directs the protein to the mitochondrion.

This sequence belongs to the complex I LYR family. SDHAF3 subfamily. Interacts with the iron-sulfur protein subunit within the SDH catalytic dimer.

It localises to the mitochondrion matrix. Functionally, plays an essential role in the assembly of succinate dehydrogenase (SDH), an enzyme complex (also referred to as respiratory complex II) that is a component of both the tricarboxylic acid (TCA) cycle and the mitochondrial electron transport chain, and which couples the oxidation of succinate to fumarate with the reduction of ubiquinone (coenzyme Q) to ubiquinol. Promotes maturation of the iron-sulfur protein subunit of the SDH catalytic dimer, protecting it from the deleterious effects of oxidants. May act together with SDHAF1. This is Succinate dehydrogenase assembly factor 3, mitochondrial from Eremothecium gossypii (strain ATCC 10895 / CBS 109.51 / FGSC 9923 / NRRL Y-1056) (Yeast).